The sequence spans 175 residues: Peptidyl-prolyl cis-trans isomerase B (175 aa).

Residues E3–V172 enclose the PPIase cyclophilin-type domain.

The protein belongs to the cyclophilin-type PPIase family.

The protein localises to the cytoplasm. It catalyses the reaction [protein]-peptidylproline (omega=180) = [protein]-peptidylproline (omega=0). Inhibited by cyclosporin A (CsA). Its function is as follows. PPIases accelerate the folding of proteins. It catalyzes the cis-trans isomerization of proline imidic peptide bonds in oligopeptides. This Streptomyces anulatus (Streptomyces chrysomallus) protein is Peptidyl-prolyl cis-trans isomerase B (cypB).